Consider the following 208-residue polypeptide: Small ribosomal subunit protein eS8 (208 aa).

Positions 1 to 34 are disordered; it reads MGISRDHWHKRRATGGKRAPIRKKRKYELGRPAA. Basic residues predominate over residues 7 to 26; the sequence is HWHKRRATGGKRAPIRKKRK.

It belongs to the eukaryotic ribosomal protein eS8 family. In terms of assembly, component of the small ribosomal subunit. Identified in a IGF2BP1-dependent mRNP granule complex containing untranslated mRNAs. Part of the small subunit (SSU) processome, composed of more than 70 proteins and the RNA chaperone small nucleolar RNA (snoRNA) U3.

It is found in the cytoplasm. Its subcellular location is the membrane. The protein resides in the nucleus. It localises to the nucleolus. Functionally, component of the small ribosomal subunit. The ribosome is a large ribonucleoprotein complex responsible for the synthesis of proteins in the cell. Part of the small subunit (SSU) processome, first precursor of the small eukaryotic ribosomal subunit. During the assembly of the SSU processome in the nucleolus, many ribosome biogenesis factors, an RNA chaperone and ribosomal proteins associate with the nascent pre-rRNA and work in concert to generate RNA folding, modifications, rearrangements and cleavage as well as targeted degradation of pre-ribosomal RNA by the RNA exosome. In Spodoptera frugiperda (Fall armyworm), this protein is Small ribosomal subunit protein eS8 (RpS8).